The following is a 278-amino-acid chain: DegV domain-containing protein YejH (278 aa).

Positions 3–277 constitute a DegV domain; that stretch reads IKIVTDSSIT…PGAWAIMIDY (275 aa). Hexadecanoate is bound by residues T60 and S92.

Its function is as follows. May bind long-chain fatty acids, such as palmitate, and may play a role in lipid transport or fatty acid metabolism. This is DegV domain-containing protein YejH (yejH) from Lactococcus lactis subsp. lactis (strain IL1403) (Streptococcus lactis).